The chain runs to 286 residues: ATP synthase gamma chain (286 aa).

It belongs to the ATPase gamma chain family. As to quaternary structure, F-type ATPases have 2 components, CF(1) - the catalytic core - and CF(0) - the membrane proton channel. CF(1) has five subunits: alpha(3), beta(3), gamma(1), delta(1), epsilon(1). CF(0) has three main subunits: a, b and c.

It localises to the cell inner membrane. In terms of biological role, produces ATP from ADP in the presence of a proton gradient across the membrane. The gamma chain is believed to be important in regulating ATPase activity and the flow of protons through the CF(0) complex. In Pseudomonas putida (strain GB-1), this protein is ATP synthase gamma chain.